Reading from the N-terminus, the 852-residue chain is Vacuolar protein sorting-associated protein 16 homolog (852 aa).

Belongs to the VPS16 family. Probable core component of at least two putative endosomal tethering complexes, the homotypic fusion and vacuole protein sorting (HOPS) complex and the class C core vacuole/endosome tethering (CORVET) complex. Their common core is composed of the class C Vps proteins vps-11, vps-16 and vps-18, which in HOPS further associates with vps-33.1, vps-39 and vps-41 and in CORVET with vps-8 and vps-33.2.

Its subcellular location is the late endosome membrane. It localises to the lysosome membrane. Its function is as follows. Plays a role in vesicle-mediated protein trafficking to lysosomal compartments including the endocytic membrane transport pathways. Believed to act as a core component of the putative HOPS and CORVET endosomal tethering complexes which are proposed to be involved in the rab-5-to-rab-7 endosome conversion probably implicating sand-1, and via binding SNAREs and SNARE complexes to mediate tethering and docking events during SNARE-mediated membrane fusion. The HOPS complex is proposed to be recruited to rab-7 on the late endosomal membrane and to regulate late endocytic, phagocytic and autophagic traffic towards lysosomes. Within the HOPS complex, contributes to the normal development of gut granules in the adult intestine. The CORVET complex is proposed to function as a rab-5 effector to mediate early endosome fusion probably in specific endosome subpopulations. Required for recruitment of vps-33.1 to the HOPS complex. Required for fusion of endosomes and autophagosomes with lysosomes; the function is dependent on its association with vps-33.1 but not vps-33.2. This chain is Vacuolar protein sorting-associated protein 16 homolog, found in Caenorhabditis elegans.